Consider the following 230-residue polypeptide: RNA polymerase sigma factor FliA (230 aa).

The segment at Leu-6 to Trp-78 is sigma-70 factor domain-2. Positions Asp-33–Gln-36 match the Interaction with polymerase core subunit RpoC motif. The tract at residues Asn-86–Asp-156 is sigma-70 factor domain-3. A sigma-70 factor domain-4 region spans residues Ala-175–Arg-223. The segment at residues Leu-197–Ser-216 is a DNA-binding region (H-T-H motif).

It belongs to the sigma-70 factor family. FliA subfamily.

The protein localises to the cytoplasm. Functionally, sigma factors are initiation factors that promote the attachment of RNA polymerase to specific initiation sites and are then released. This sigma factor controls the expression of flagella-related genes. The protein is RNA polymerase sigma factor FliA of Yersinia enterocolitica.